We begin with the raw amino-acid sequence, 413 residues long: Tyrosine--tRNA ligase (413 aa).

An L-tyrosine-binding site is contributed by Tyr-34. The 'HIGH' region signature appears at 39–48 (PTSHSLTVGH). Tyr-164 and Gln-168 together coordinate L-tyrosine. The 'KMSKS' region motif lies at 225–229 (KFGKS). Position 228 (Lys-228) interacts with ATP. Residues 347-413 (ILLVDALVQT…GKKNNALIVF (67 aa)) enclose the S4 RNA-binding domain.

This sequence belongs to the class-I aminoacyl-tRNA synthetase family. TyrS type 1 subfamily. As to quaternary structure, homodimer.

Its subcellular location is the cytoplasm. The catalysed reaction is tRNA(Tyr) + L-tyrosine + ATP = L-tyrosyl-tRNA(Tyr) + AMP + diphosphate + H(+). Catalyzes the attachment of tyrosine to tRNA(Tyr) in a two-step reaction: tyrosine is first activated by ATP to form Tyr-AMP and then transferred to the acceptor end of tRNA(Tyr). This chain is Tyrosine--tRNA ligase, found in Aster yellows witches'-broom phytoplasma (strain AYWB).